The chain runs to 361 residues: Chorismate synthase (361 aa).

Arg-48 and Arg-54 together coordinate NADP(+). Residues 125–127, 238–239, Gly-278, 293–297, and Arg-319 contribute to the FMN site; these read RSS, NA, and KPTSS.

Belongs to the chorismate synthase family. Homotetramer. It depends on FMNH2 as a cofactor.

The catalysed reaction is 5-O-(1-carboxyvinyl)-3-phosphoshikimate = chorismate + phosphate. Its pathway is metabolic intermediate biosynthesis; chorismate biosynthesis; chorismate from D-erythrose 4-phosphate and phosphoenolpyruvate: step 7/7. Its function is as follows. Catalyzes the anti-1,4-elimination of the C-3 phosphate and the C-6 proR hydrogen from 5-enolpyruvylshikimate-3-phosphate (EPSP) to yield chorismate, which is the branch point compound that serves as the starting substrate for the three terminal pathways of aromatic amino acid biosynthesis. This reaction introduces a second double bond into the aromatic ring system. This is Chorismate synthase from Shigella boydii serotype 18 (strain CDC 3083-94 / BS512).